Here is a 280-residue protein sequence, read N- to C-terminus: 2,3,4,5-tetrahydropyridine-2,6-dicarboxylate N-succinyltransferase (280 aa).

Residues Arg-107 and Asp-144 each coordinate substrate.

This sequence belongs to the transferase hexapeptide repeat family. As to quaternary structure, homotrimer.

Its subcellular location is the cytoplasm. The catalysed reaction is (S)-2,3,4,5-tetrahydrodipicolinate + succinyl-CoA + H2O = (S)-2-succinylamino-6-oxoheptanedioate + CoA. It functions in the pathway amino-acid biosynthesis; L-lysine biosynthesis via DAP pathway; LL-2,6-diaminopimelate from (S)-tetrahydrodipicolinate (succinylase route): step 1/3. This chain is 2,3,4,5-tetrahydropyridine-2,6-dicarboxylate N-succinyltransferase, found in Granulibacter bethesdensis (strain ATCC BAA-1260 / CGDNIH1).